A 120-amino-acid polypeptide reads, in one-letter code: Peptidyl-tRNA hydrolase (120 aa).

This sequence belongs to the PTH2 family.

Its subcellular location is the cytoplasm. It carries out the reaction an N-acyl-L-alpha-aminoacyl-tRNA + H2O = an N-acyl-L-amino acid + a tRNA + H(+). The natural substrate for this enzyme may be peptidyl-tRNAs which drop off the ribosome during protein synthesis. The polypeptide is Peptidyl-tRNA hydrolase (Pyrobaculum aerophilum (strain ATCC 51768 / DSM 7523 / JCM 9630 / CIP 104966 / NBRC 100827 / IM2)).